The chain runs to 704 residues: Elongation factor G (704 aa).

The tr-type G domain occupies 8-291 (DKVRNIGIMA…AVVEYLASPV (284 aa)). GTP contacts are provided by residues 17-24 (AHIDAGKT), 90-94 (DTPGH), and 144-147 (NKMD).

The protein belongs to the TRAFAC class translation factor GTPase superfamily. Classic translation factor GTPase family. EF-G/EF-2 subfamily.

The protein localises to the cytoplasm. Catalyzes the GTP-dependent ribosomal translocation step during translation elongation. During this step, the ribosome changes from the pre-translocational (PRE) to the post-translocational (POST) state as the newly formed A-site-bound peptidyl-tRNA and P-site-bound deacylated tRNA move to the P and E sites, respectively. Catalyzes the coordinated movement of the two tRNA molecules, the mRNA and conformational changes in the ribosome. This is Elongation factor G from Chlorobium limicola (strain DSM 245 / NBRC 103803 / 6330).